The primary structure comprises 142 residues: Hemoglobin subunit alpha (142 aa).

The 141-residue stretch at 2–142 (VLSSADKNNV…VSTVLTSKYR (141 aa)) folds into the Globin domain. Position 4 is a phosphoserine (Ser4). Residues Lys8 and Lys12 each carry the N6-succinyllysine modification. Lys17 bears the N6-acetyllysine; alternate mark. Lys17 carries the N6-succinyllysine; alternate modification. Tyr25 carries the post-translational modification Phosphotyrosine. Ser36 bears the Phosphoserine mark. Lys41 carries the post-translational modification N6-succinyllysine. Residue Ser50 is modified to Phosphoserine. His59 contacts O2. His88 lines the heme b pocket. The residue at position 103 (Ser103) is a Phosphoserine. Thr109 bears the Phosphothreonine mark. Residue Ser125 is modified to Phosphoserine. Phosphothreonine occurs at positions 135 and 138. Ser139 is subject to Phosphoserine.

The protein belongs to the globin family. As to quaternary structure, heterotetramer of two alpha chains and two beta chains. Red blood cells.

Functionally, involved in oxygen transport from the lung to the various peripheral tissues. Hemopressin acts as an antagonist peptide of the cannabinoid receptor CNR1. Hemopressin-binding efficiently blocks cannabinoid receptor CNR1 and subsequent signaling. The sequence is that of Hemoglobin subunit alpha (HBA) from Panthera onca (Jaguar).